The chain runs to 128 residues: Mite group 2 allergen Gly d 2.01 (128 aa).

Belongs to the NPC2 family.

The protein localises to the secreted. The chain is Mite group 2 allergen Gly d 2.01 from Glycyphagus domesticus (House itch mite).